We begin with the raw amino-acid sequence, 518 residues long: Cytokinin hydroxylase (518 aa).

The helical transmembrane segment at 1-21 threads the bilayer; it reads MLLTILKSLLVIFVTTILRVL. Residue Cys-464 participates in heme binding.

Belongs to the cytochrome P450 family. Heme is required as a cofactor. As to expression, expressed in roots and flowers.

The protein localises to the membrane. The enzyme catalyses N(6)-(dimethylallyl)adenosine 5'-phosphate + NADPH + O2 + H(+) = 9-ribosyl-trans-zeatin 5'-phosphate + NADP(+) + H2O. The catalysed reaction is N(6)-(dimethylallyl)adenosine 5'-diphosphate + NADPH + O2 + H(+) = 9-ribosyl-trans-zeatin 5'-diphosphate + NADP(+) + H2O. It catalyses the reaction N(6)-(dimethylallyl)adenosine 5'-triphosphate + NADPH + O2 + H(+) = 9-ribosyl-trans-zeatin 5'-triphosphate + NADP(+) + H2O. In terms of biological role, cytokinin hydroxylase that catalyzes the biosynthesis of trans-zeatin via the isopentenyladenine riboside 5'-monophosphate (iPRMP)-dependent pathway. Can use isopentenyladenosine-5'-monophosphate, isopentenyladenosine-5'-diphosphate and isopentenyladenosine-5'-triphosphate as substrate. The polypeptide is Cytokinin hydroxylase (CYP735A1) (Arabidopsis thaliana (Mouse-ear cress)).